Consider the following 188-residue polypeptide: Cell division protein ZapC (188 aa).

Belongs to the ZapC family. In terms of assembly, interacts directly with FtsZ.

The protein resides in the cytoplasm. Contributes to the efficiency of the cell division process by stabilizing the polymeric form of the cell division protein FtsZ. Acts by promoting interactions between FtsZ protofilaments and suppressing the GTPase activity of FtsZ. This Psychromonas ingrahamii (strain DSM 17664 / CCUG 51855 / 37) protein is Cell division protein ZapC.